The chain runs to 144 residues: 3-hydroxyacyl-[acyl-carrier-protein] dehydratase FabZ (144 aa).

Residue H51 is part of the active site.

This sequence belongs to the thioester dehydratase family. FabZ subfamily.

Its subcellular location is the cytoplasm. The catalysed reaction is a (3R)-hydroxyacyl-[ACP] = a (2E)-enoyl-[ACP] + H2O. Its function is as follows. Involved in unsaturated fatty acids biosynthesis. Catalyzes the dehydration of short chain beta-hydroxyacyl-ACPs and long chain saturated and unsaturated beta-hydroxyacyl-ACPs. The polypeptide is 3-hydroxyacyl-[acyl-carrier-protein] dehydratase FabZ (Lactococcus lactis subsp. cremoris (strain SK11)).